We begin with the raw amino-acid sequence, 122 residues long: Large ribosomal subunit protein uL14 (122 aa).

This sequence belongs to the universal ribosomal protein uL14 family. As to quaternary structure, part of the 50S ribosomal subunit. Forms a cluster with proteins L3 and L19. In the 70S ribosome, L14 and L19 interact and together make contacts with the 16S rRNA in bridges B5 and B8.

In terms of biological role, binds to 23S rRNA. Forms part of two intersubunit bridges in the 70S ribosome. This Mesorhizobium japonicum (strain LMG 29417 / CECT 9101 / MAFF 303099) (Mesorhizobium loti (strain MAFF 303099)) protein is Large ribosomal subunit protein uL14.